Consider the following 759-residue polypeptide: LON peptidase N-terminal domain and RING finger protein 3 (759 aa).

The segment at 1-69 is disordered; it reads MESVRIEQML…PGTSTPESKV (69 aa). Over residues 57–66 the composition is skewed to polar residues; that stretch reads EQSPGTSTPE. Residues 67-100 form a TPR 1 repeat; it reads SKVLLTQADALASRGRIREALEVYRQLSERQQLV. The RING-type 1 zinc finger occupies 158–196; that stretch reads CRKCHGFLSDPVSLSCGHTFCKLCLERGRAADRRCALCG. TPR repeat units lie at residues 243–276, 278–310, and 312–344; these read ASQL…APND, LLYS…RPMG, and KAHF…DGKN. Residues 360-454 are disordered; it reads HCSSQEEAAA…TDQGDKPALS (95 aa). Positions 380 to 393 are enriched in basic and acidic residues; it reads AKVKGDGQQHHMKD. The segment at 467–505 adopts an RING-type 2 zinc-finger fold; that stretch reads CALCMRLFYEPVTTPCGHTFCLKCLERCLDHNAKCPLCK. The Lon N-terminal domain maps to 546–755; it reads MEELSNLNKN…GIRRVLAFIS (210 aa).

The chain is LON peptidase N-terminal domain and RING finger protein 3 (LONRF3) from Homo sapiens (Human).